A 160-amino-acid chain; its full sequence is Cyclic pyranopterin monophosphate synthase (160 aa).

Substrate contacts are provided by residues 73-75 and 110-111; these read LCH and ME. The active site involves Asp-125.

Belongs to the MoaC family. In terms of assembly, homohexamer; trimer of dimers.

It catalyses the reaction (8S)-3',8-cyclo-7,8-dihydroguanosine 5'-triphosphate = cyclic pyranopterin phosphate + diphosphate. It functions in the pathway cofactor biosynthesis; molybdopterin biosynthesis. Catalyzes the conversion of (8S)-3',8-cyclo-7,8-dihydroguanosine 5'-triphosphate to cyclic pyranopterin monophosphate (cPMP). In Pseudomonas paraeruginosa (strain DSM 24068 / PA7) (Pseudomonas aeruginosa (strain PA7)), this protein is Cyclic pyranopterin monophosphate synthase.